The primary structure comprises 427 residues: Glutamate-1-semialdehyde 2,1-aminomutase (427 aa).

At K265 the chain carries N6-(pyridoxal phosphate)lysine.

Belongs to the class-III pyridoxal-phosphate-dependent aminotransferase family. HemL subfamily. As to quaternary structure, homodimer. Pyridoxal 5'-phosphate is required as a cofactor.

Its subcellular location is the cytoplasm. It catalyses the reaction (S)-4-amino-5-oxopentanoate = 5-aminolevulinate. It functions in the pathway porphyrin-containing compound metabolism; protoporphyrin-IX biosynthesis; 5-aminolevulinate from L-glutamyl-tRNA(Glu): step 2/2. The chain is Glutamate-1-semialdehyde 2,1-aminomutase from Pseudomonas aeruginosa (strain LESB58).